A 362-amino-acid polypeptide reads, in one-letter code: Chorismate synthase (362 aa).

NADP(+) is bound by residues arginine 48 and arginine 54. Residues 131–133 (RSS), 243–244 (NA), glycine 287, 302–306 (KPTSS), and arginine 328 each bind FMN.

This sequence belongs to the chorismate synthase family. In terms of assembly, homotetramer. Requires FMNH2 as cofactor.

It catalyses the reaction 5-O-(1-carboxyvinyl)-3-phosphoshikimate = chorismate + phosphate. It participates in metabolic intermediate biosynthesis; chorismate biosynthesis; chorismate from D-erythrose 4-phosphate and phosphoenolpyruvate: step 7/7. Its function is as follows. Catalyzes the anti-1,4-elimination of the C-3 phosphate and the C-6 proR hydrogen from 5-enolpyruvylshikimate-3-phosphate (EPSP) to yield chorismate, which is the branch point compound that serves as the starting substrate for the three terminal pathways of aromatic amino acid biosynthesis. This reaction introduces a second double bond into the aromatic ring system. The sequence is that of Chorismate synthase from Bradyrhizobium diazoefficiens (strain JCM 10833 / BCRC 13528 / IAM 13628 / NBRC 14792 / USDA 110).